The sequence spans 308 residues: Homeobox-leucine zipper protein HOX2 (308 aa).

Disordered regions lie at residues 15–36 (QGSLTSSTTTTSSPGAGSSSPW) and 71–117 (QGRA…RKKL). Residues 74–88 (ASTSPDSAAALSSAS) are compositionally biased toward low complexity. The segment at residues 112–171 (GGRKKLRLSKDQAAVLEECFKTHSTLNPKQKVALANRLGLRPRQVEVWFQNRRARTKLKQ) is a DNA-binding region (homeobox). The leucine-zipper stretch occupies residues 170–214 (KQTEVDCEYLKRWCERLADENKRLEKELADLRALKAAPSPASASA).

The protein belongs to the HD-ZIP homeobox family. Class II subfamily. In terms of assembly, homodimer. May form a heterodimer with HOX1, HOX3 or HOX7. Expressed in seedlings, roots, leaves, nodes, internodes, flowers and embryo.

The protein resides in the nucleus. In terms of biological role, probable transcription factor that binds to the DNA sequence 5'-CAAT[GC]ATTG-3'. This chain is Homeobox-leucine zipper protein HOX2 (HOX2), found in Oryza sativa subsp. indica (Rice).